We begin with the raw amino-acid sequence, 255 residues long: MELIPAIDLLEGNCVRLVQGNYNKVTKFNSDPVSQALRWEDMGASRLHIVDLDAARQGFSSNDDVIKQIAKSLSIPIQIGGGIRTSKRAKELLDYGIDRVIIGTAALEDPRLVEDLASAFPKKIVLGIDAKEGKVATRGWIEQSDVRTEDLIKQFSNAKIAAIISTDISTDGTLEGPNLKSLTSVAKVSNAPVIASGGIGSLADLISLTTLEKAGVTGVIVGRALYDNKFSLEEAIKVLLNIDLQDQPFNAKNIA.

Catalysis depends on D8, which acts as the Proton acceptor. The active-site Proton donor is D129.

Belongs to the HisA/HisF family.

Its subcellular location is the cytoplasm. It carries out the reaction 1-(5-phospho-beta-D-ribosyl)-5-[(5-phospho-beta-D-ribosylamino)methylideneamino]imidazole-4-carboxamide = 5-[(5-phospho-1-deoxy-D-ribulos-1-ylimino)methylamino]-1-(5-phospho-beta-D-ribosyl)imidazole-4-carboxamide. It participates in amino-acid biosynthesis; L-histidine biosynthesis; L-histidine from 5-phospho-alpha-D-ribose 1-diphosphate: step 4/9. The sequence is that of 1-(5-phosphoribosyl)-5-[(5-phosphoribosylamino)methylideneamino] imidazole-4-carboxamide isomerase from Prochlorococcus marinus (strain MIT 9211).